The primary structure comprises 342 residues: Thioredoxin reductase 2, mitochondrial (342 aa).

A mitochondrion-targeting transit peptide spans 1-23; that stretch reads MIKHIVSPFRTNFVGISKSVLSR. FAD-binding positions include 34–37, 56–68, 63–64, Gln-68, Asn-77, Val-110, Cys-168, Asp-311, 311–320, and 318–320; these read SGPA, EGMM…AGGQ, IA, DVQDSRYRQA, and RQA. A disulfide bridge links Cys-165 with Cys-168.

Belongs to the class-II pyridine nucleotide-disulfide oxidoreductase family. As to quaternary structure, homodimer. It depends on FAD as a cofactor.

The protein localises to the mitochondrion. The enzyme catalyses [thioredoxin]-dithiol + NADP(+) = [thioredoxin]-disulfide + NADPH + H(+). Functionally, acts on mitochondrial thioredoxin 3. Implicated in the defense against oxidative stress. This chain is Thioredoxin reductase 2, mitochondrial, found in Saccharomyces cerevisiae (strain ATCC 204508 / S288c) (Baker's yeast).